A 345-amino-acid polypeptide reads, in one-letter code: Beta-2-glycoprotein 1 (345 aa).

Residues Met-1–Ala-19 form the signal peptide. Sushi domains lie at Arg-21–Pro-81, Arg-82–Pro-139, Ile-140–Glu-202, and Val-203–Ala-262. Intrachain disulfides connect Cys-23/Cys-66, Cys-51/Cys-79, Cys-84/Cys-124, Cys-110/Cys-137, Cys-142/Cys-188, Cys-174/Cys-200, Cys-205/Cys-248, Cys-234/Cys-260, Cys-264/Cys-315, Cys-300/Cys-325, and Cys-307/Cys-345. Thr-33 carries an O-linked (GalNAc...) threonine glycan. O-linked (GalNAc...) threonine glycosylation occurs at Thr-149. Asn-162, Asn-183, and Asn-193 each carry an N-linked (GlcNAc...) asparagine glycan. Asn-253 carries N-linked (GlcNAc...) asparagine glycosylation. The sushi-like stretch occupies residues Ser-263–Cys-345.

In terms of tissue distribution, expressed by the liver and secreted in plasma.

The protein resides in the secreted. Binds to various kinds of negatively charged substances such as heparin, phospholipids, and dextran sulfate. May prevent activation of the intrinsic blood coagulation cascade by binding to phospholipids on the surface of damaged cells. The sequence is that of Beta-2-glycoprotein 1 (APOH) from Pan troglodytes (Chimpanzee).